The following is a 610-amino-acid chain: Isocitrate dehydrogenase kinase/phosphatase (610 aa).

ATP is bound by residues 359 to 365 and K380; that span reads APGFKGT. Residue D419 is part of the active site.

It belongs to the AceK family.

Its subcellular location is the cytoplasm. The catalysed reaction is L-seryl-[isocitrate dehydrogenase] + ATP = O-phospho-L-seryl-[isocitrate dehydrogenase] + ADP + H(+). In terms of biological role, bifunctional enzyme which can phosphorylate or dephosphorylate isocitrate dehydrogenase (IDH) on a specific serine residue. This is a regulatory mechanism which enables bacteria to bypass the Krebs cycle via the glyoxylate shunt in response to the source of carbon. When bacteria are grown on glucose, IDH is fully active and unphosphorylated, but when grown on acetate or ethanol, the activity of IDH declines drastically concomitant with its phosphorylation. This chain is Isocitrate dehydrogenase kinase/phosphatase, found in Rhodopseudomonas palustris (strain TIE-1).